The chain runs to 464 residues: Dihydrolipoyllysine-residue succinyltransferase component of 2-oxoglutarate dehydrogenase complex 1, mitochondrial (464 aa).

The N-terminal 86 residues, 1–86 (MMLRAVFRRA…TALQRWVRPF (86 aa)), are a transit peptide targeting the mitochondrion. A Lipoyl-binding domain is found at 93 to 168 (VVEAVVPHMG…EPGNKVARIS (76 aa)). An N6-lipoyllysine modification is found at lysine 134. A disordered region spans residues 168–242 (STSADAVSHV…DRERRVPMTR (75 aa)). Residues 196 to 210 (EKPKVESTKVAEKPK) are compositionally biased toward basic and acidic residues. The segment covering 211 to 220 (APSPPPPPPS) has biased composition (pro residues). Residues histidine 435 and aspartate 439 contribute to the active site.

This sequence belongs to the 2-oxoacid dehydrogenase family. As to quaternary structure, forms a 24-polypeptide structural core with octahedral symmetry. (R)-lipoate is required as a cofactor.

The protein resides in the mitochondrion. It catalyses the reaction N(6)-[(R)-dihydrolipoyl]-L-lysyl-[protein] + succinyl-CoA = N(6)-[(R)-S(8)-succinyldihydrolipoyl]-L-lysyl-[protein] + CoA. The protein operates within amino-acid degradation; L-lysine degradation via saccharopine pathway; glutaryl-CoA from L-lysine: step 6/6. The 2-oxoglutarate dehydrogenase complex catalyzes the overall conversion of 2-oxoglutarate to succinyl-CoA and CO(2). It contains multiple copies of three enzymatic components: 2-oxoglutarate dehydrogenase (E1), dihydrolipoamide succinyltransferase (E2) and lipoamide dehydrogenase (E3). This chain is Dihydrolipoyllysine-residue succinyltransferase component of 2-oxoglutarate dehydrogenase complex 1, mitochondrial, found in Arabidopsis thaliana (Mouse-ear cress).